We begin with the raw amino-acid sequence, 423 residues long: Imidazolonepropionase (423 aa).

Positions 78 and 80 each coordinate Fe(3+). 2 residues coordinate Zn(2+): H78 and H80. R87, Y150, and H183 together coordinate 4-imidazolone-5-propanoate. Y150 serves as a coordination point for N-formimidoyl-L-glutamate. H247 is a Fe(3+) binding site. H247 lines the Zn(2+) pocket. E250 contributes to the 4-imidazolone-5-propanoate binding site. Position 322 (D322) interacts with Fe(3+). A Zn(2+)-binding site is contributed by D322. N324 and G326 together coordinate N-formimidoyl-L-glutamate. A 4-imidazolone-5-propanoate-binding site is contributed by S327.

Belongs to the metallo-dependent hydrolases superfamily. HutI family. Zn(2+) serves as cofactor. The cofactor is Fe(3+).

It localises to the cytoplasm. The catalysed reaction is 4-imidazolone-5-propanoate + H2O = N-formimidoyl-L-glutamate. The protein operates within amino-acid degradation; L-histidine degradation into L-glutamate; N-formimidoyl-L-glutamate from L-histidine: step 3/3. Catalyzes the hydrolytic cleavage of the carbon-nitrogen bond in imidazolone-5-propanoate to yield N-formimidoyl-L-glutamate. It is the third step in the universal histidine degradation pathway. The chain is Imidazolonepropionase from Bacillus cytotoxicus (strain DSM 22905 / CIP 110041 / 391-98 / NVH 391-98).